A 475-amino-acid chain; its full sequence is Probable proline--tRNA ligase, mitochondrial (475 aa).

The N-terminal 29 residues, 1–29, are a transit peptide targeting the mitochondrion; sequence MEGLLTRCRTLSALATCSLRHSRCIVRKC.

It belongs to the class-II aminoacyl-tRNA synthetase family.

The protein localises to the mitochondrion matrix. The catalysed reaction is tRNA(Pro) + L-proline + ATP = L-prolyl-tRNA(Pro) + AMP + diphosphate. Functionally, mitochondrial aminoacyl-tRNA synthetase that catalyzes the specific attachment of the proline amino acid (aa) to the homologous transfer RNA (tRNA), further participating in protein synthesis. The reaction occurs in a two steps: proline is first activated by ATP to form Pro-AMP and then transferred to the acceptor end of tRNA(Pro). The sequence is that of Probable proline--tRNA ligase, mitochondrial (Pars2) from Rattus norvegicus (Rat).